The following is a 318-amino-acid chain: ATP phosphoribosyltransferase regulatory subunit (318 aa).

It belongs to the class-II aminoacyl-tRNA synthetase family. HisZ subfamily. Heteromultimer composed of HisG and HisZ subunits.

It localises to the cytoplasm. The protein operates within amino-acid biosynthesis; L-histidine biosynthesis; L-histidine from 5-phospho-alpha-D-ribose 1-diphosphate: step 1/9. Required for the first step of histidine biosynthesis. May allow the feedback regulation of ATP phosphoribosyltransferase activity by histidine. The sequence is that of ATP phosphoribosyltransferase regulatory subunit from Lactococcus lactis subsp. cremoris (strain SK11).